The following is a 94-amino-acid chain: Cell division topological specificity factor (94 aa).

It belongs to the MinE family.

In terms of biological role, prevents the cell division inhibition by proteins MinC and MinD at internal division sites while permitting inhibition at polar sites. This ensures cell division at the proper site by restricting the formation of a division septum at the midpoint of the long axis of the cell. This is Cell division topological specificity factor from Alkaliphilus metalliredigens (strain QYMF).